Reading from the N-terminus, the 418-residue chain is Tyrosine--tRNA ligase (418 aa).

Tyrosine 34 serves as a coordination point for L-tyrosine. The short motif at 39–48 is the 'HIGH' region element; that stretch reads PTADSLHLGH. Positions 169 and 173 each coordinate L-tyrosine. The short motif at 229–233 is the 'KMSKS' region element; it reads KFGKS. Residue lysine 232 participates in ATP binding. Residues 352–418 enclose the S4 RNA-binding domain; it reads NNIVELLVSS…GKKKYFVLTY (67 aa).

Belongs to the class-I aminoacyl-tRNA synthetase family. TyrS type 1 subfamily. In terms of assembly, homodimer.

The protein resides in the cytoplasm. The catalysed reaction is tRNA(Tyr) + L-tyrosine + ATP = L-tyrosyl-tRNA(Tyr) + AMP + diphosphate + H(+). Functionally, catalyzes the attachment of tyrosine to tRNA(Tyr) in a two-step reaction: tyrosine is first activated by ATP to form Tyr-AMP and then transferred to the acceptor end of tRNA(Tyr). The polypeptide is Tyrosine--tRNA ligase (Streptococcus pneumoniae (strain Taiwan19F-14)).